Consider the following 270-residue polypeptide: ATP synthase subunit a (270 aa).

A run of 6 helical transmembrane segments spans residues 27–47 (FWTF…VFIL), 90–110 (IAPL…MDLI), 147–166 (VNMT…FYSV), 182–202 (PFNT…SLIA), 211–231 (LFGN…TLGV), and 238–258 (FLWA…FMML).

Belongs to the ATPase A chain family. As to quaternary structure, F-type ATPases have 2 components, CF(1) - the catalytic core - and CF(0) - the membrane proton channel. CF(1) has five subunits: alpha(3), beta(3), gamma(1), delta(1), epsilon(1). CF(0) has three main subunits: a(1), b(2) and c(9-12). The alpha and beta chains form an alternating ring which encloses part of the gamma chain. CF(1) is attached to CF(0) by a central stalk formed by the gamma and epsilon chains, while a peripheral stalk is formed by the delta and b chains.

It is found in the cell inner membrane. Functionally, key component of the proton channel; it plays a direct role in the translocation of protons across the membrane. This Pseudoalteromonas atlantica (strain T6c / ATCC BAA-1087) protein is ATP synthase subunit a.